The following is a 508-amino-acid chain: Photosystem II CP47 reaction center protein (508 aa).

Transmembrane regions (helical) follow at residues Ser-21 to Ser-36, Ile-101 to Trp-115, Gly-140 to Phe-156, Ile-203 to Ser-218, Val-237 to Val-252, and Thr-457 to Arg-472.

Belongs to the PsbB/PsbC family. PsbB subfamily. PSII is composed of 1 copy each of membrane proteins PsbA, PsbB, PsbC, PsbD, PsbE, PsbF, PsbH, PsbI, PsbJ, PsbK, PsbL, PsbM, PsbT, PsbX, PsbY, PsbZ, Psb30/Ycf12, at least 3 peripheral proteins of the oxygen-evolving complex and a large number of cofactors. It forms dimeric complexes. Requires Binds multiple chlorophylls. PSII binds additional chlorophylls, carotenoids and specific lipids. as cofactor.

Its subcellular location is the plastid. It localises to the chloroplast thylakoid membrane. In terms of biological role, one of the components of the core complex of photosystem II (PSII). It binds chlorophyll and helps catalyze the primary light-induced photochemical processes of PSII. PSII is a light-driven water:plastoquinone oxidoreductase, using light energy to abstract electrons from H(2)O, generating O(2) and a proton gradient subsequently used for ATP formation. This Angiopteris evecta (Mule's foot fern) protein is Photosystem II CP47 reaction center protein.